The following is a 109-amino-acid chain: Mitochondrial import inner membrane translocase subunit TIM12 (109 aa).

Serine 2 carries the N-acetylserine modification. Residues 40–66 carry the Twin CX3C motif motif; that stretch reads CLEKCIPHEGFGEPDLTKGEQCCIDRC. Disulfide bonds link cysteine 40–cysteine 66 and cysteine 44–cysteine 62.

Belongs to the small Tim family. As to quaternary structure, component of the TIM22 complex, whose core is composed of TIM18, TIM22 and TIM54, associated with the peripheral proteins MRS5/TIM12 and the 70 kDa heterohexamer composed of TIM9 and TIM10 (or TIM8 and TIM13). Interacts directly with both the TIM22 protein and the TIM9-TIM10 heterohexamer. Interacts with multi-pass transmembrane proteins in transit.

Its subcellular location is the mitochondrion inner membrane. It localises to the mitochondrion intermembrane space. In terms of biological role, essential component of the TIM22 complex, a complex that mediates the import and insertion of multi-pass transmembrane proteins into the mitochondrial inner membrane. The TIM22 complex forms a twin-pore translocase that uses the membrane potential as external driving force. In the TIM22 complex, it acts as a docking point for the soluble TIM9-TIM10 heterohexamer that guides the target proteins in transit through the aqueous mitochondrial intermembrane space. This is Mitochondrial import inner membrane translocase subunit TIM12 (TIM12) from Saccharomyces cerevisiae (strain ATCC 204508 / S288c) (Baker's yeast).